Here is a 686-residue protein sequence, read N- to C-terminus: Delta-like protein 4 (686 aa).

An N-terminal signal peptide occupies residues 1 to 26; sequence MTPASRSACRWALLLLAVLWPQQRAA. The Extracellular segment spans residues 27–532; sequence GSGIFQLRLQ…GLPPSFPWVA (506 aa). Intrachain disulfides connect Cys-51-Cys-55 and Cys-62-Cys-75. Residues Asn-79, Asn-109, and Asn-162 are each glycosylated (N-linked (GlcNAc...) asparagine). The DSL domain maps to 174-218; sequence VICSDNYYGESCSRLCKKRDDHFGHYECQPDGSLSCLPGWTGKYC. A disulfide bond links Cys-176 and Cys-185. Interaction with Notch1 stretches follow at residues 186–188 and 192–196; these read SRL and RDDHF. Intrachain disulfides connect Cys-189-Cys-201, Cys-209-Cys-218, Cys-223-Cys-234, Cys-227-Cys-240, Cys-242-Cys-251, Cys-254-Cys-265, Cys-260-Cys-271, Cys-273-Cys-282, Cys-289-Cys-301, Cys-295-Cys-311, Cys-313-Cys-322, Cys-329-Cys-340, Cys-334-Cys-349, Cys-351-Cys-360, Cys-367-Cys-378, Cys-372-Cys-389, Cys-391-Cys-400, Cys-407-Cys-418, Cys-412-Cys-427, Cys-429-Cys-438, Cys-445-Cys-456, Cys-450-Cys-465, Cys-467-Cys-476, Cys-485-Cys-496, Cys-490-Cys-507, and Cys-509-Cys-518. 8 EGF-like domains span residues 219-252, 253-283, 285-323, 325-361, 364-401, 403-439, 441-477, and 481-519; these read DQPI…RLCN, ECIP…LFCD, DLNY…EHCE, GLSK…QHCE, TLTC…SNCE, KVDR…THCE, HISD…RRCE, and THDA…SRCE. Residue Asn-297 is glycosylated (N-linked (GlcNAc...) asparagine). An N-linked (GlcNAc...) asparagine glycan is attached at Asn-394. Residues 533 to 553 traverse the membrane as a helical segment; the sequence is VSLGVGLVVLLVLLVMVVVAV. At 554–686 the chain is on the cytoplasmic side; it reads RQLRLRRPDD…RNECVIATEV (133 aa).

Interacts with NOTCH4. Interacts (via N-terminal DSL and MNNL domains) with NOTCH1 (via EGF-like domains). Expressed in vascular endothelium. Expressed in retina at least during embryogenesis.

It localises to the cell membrane. In terms of biological role, involved in the Notch signaling pathway as Notch ligand. Activates NOTCH1 and NOTCH4. Involved in angiogenesis; negatively regulates endothelial cell proliferation and migration and angiogenic sprouting. Essential for retinal progenitor proliferation. Required for suppressing rod fates in late retinal progenitors as well as for proper generation of other retinal cell types. During spinal cord neurogenesis, inhibits V2a interneuron fate. In Mus musculus (Mouse), this protein is Delta-like protein 4 (Dll4).